Reading from the N-terminus, the 427-residue chain is Glutamate-1-semialdehyde 2,1-aminomutase (427 aa).

Position 264 is an N6-(pyridoxal phosphate)lysine (K264).

The protein belongs to the class-III pyridoxal-phosphate-dependent aminotransferase family. HemL subfamily. In terms of assembly, homodimer. It depends on pyridoxal 5'-phosphate as a cofactor.

It is found in the cytoplasm. The enzyme catalyses (S)-4-amino-5-oxopentanoate = 5-aminolevulinate. It functions in the pathway porphyrin-containing compound metabolism; protoporphyrin-IX biosynthesis; 5-aminolevulinate from L-glutamyl-tRNA(Glu): step 2/2. The chain is Glutamate-1-semialdehyde 2,1-aminomutase from Clostridium botulinum (strain Eklund 17B / Type B).